The following is an 89-amino-acid chain: Large ribosomal subunit protein bL27 (89 aa).

The disordered stretch occupies residues 1–21 (MAHKKAGGSSRNGRDSKGKRL).

This sequence belongs to the bacterial ribosomal protein bL27 family.

The protein is Large ribosomal subunit protein bL27 of Bradyrhizobium sp. (strain BTAi1 / ATCC BAA-1182).